The following is a 491-amino-acid chain: UDP-N-acetylmuramate--L-alanine ligase (491 aa).

126 to 132 (GTHGKTT) lines the ATP pocket.

Belongs to the MurCDEF family.

It is found in the cytoplasm. It carries out the reaction UDP-N-acetyl-alpha-D-muramate + L-alanine + ATP = UDP-N-acetyl-alpha-D-muramoyl-L-alanine + ADP + phosphate + H(+). It functions in the pathway cell wall biogenesis; peptidoglycan biosynthesis. Functionally, cell wall formation. The chain is UDP-N-acetylmuramate--L-alanine ligase from Enterobacter sp. (strain 638).